The following is a 162-amino-acid chain: Disulfide bond formation protein B (162 aa).

Residues 1–8 (MTPLFRKA) lie on the Cytoplasmic side of the membrane. Residues 9 to 25 (VWLLFAVSVCAFAGSLA) form a helical membrane-spanning segment. Residues 26–43 (AQYVLGMEPCVLCISQRL) are Periplasmic-facing. An intrachain disulfide couples Cys-35 to Cys-38. Residues 44–60 (CVLATALCAAIVLMCRP) traverse the membrane as a helical segment. Over 61–67 (RRKAGGL) the chain is Cytoplasmic. Residues 68 to 85 (FGAVFISIPAVTGISVAA) form a helical membrane-spanning segment. Residues 86–141 (YQLWLQSLPPGTAPSCGAPWTFRLKGWPLFDWFEPVVRGFGNCAEPDYLLGVALPV) are Periplasmic-facing. Cys-101 and Cys-128 are oxidised to a cystine. A helical transmembrane segment spans residues 142–160 (WSVAYFLAVALTVWWAWAR). Residues 161-162 (AK) are Cytoplasmic-facing.

This sequence belongs to the DsbB family.

Its subcellular location is the cell inner membrane. In terms of biological role, required for disulfide bond formation in some periplasmic proteins. Acts by oxidizing the DsbA protein. This Neisseria meningitidis serogroup A / serotype 4A (strain DSM 15465 / Z2491) protein is Disulfide bond formation protein B.